A 255-amino-acid chain; its full sequence is Indole-3-glycerol phosphate synthase (255 aa).

The protein belongs to the TrpC family.

The enzyme catalyses 1-(2-carboxyphenylamino)-1-deoxy-D-ribulose 5-phosphate + H(+) = (1S,2R)-1-C-(indol-3-yl)glycerol 3-phosphate + CO2 + H2O. Its pathway is amino-acid biosynthesis; L-tryptophan biosynthesis; L-tryptophan from chorismate: step 4/5. The protein is Indole-3-glycerol phosphate synthase of Streptococcus sanguinis (strain SK36).